The primary structure comprises 626 residues: Zinc finger protein 471 (626 aa).

The region spanning 14 to 85 is the KRAB domain; that stretch reads VTFKDVAIDF…TSEMTRSPFS (72 aa). C2H2-type zinc fingers lie at residues 206–228, 234–256, 262–284, 290–312, 318–340, 346–369, 375–397, 403–425, 431–453, 459–481, 487–509, 515–537, 543–565, 571–593, and 599–621; these read FKCN…FRIH, YACE…HRTH, FECK…QRIH, YKCK…QRIH, YECK…QRCH, YECI…RSYH, FNCI…RRIH, YKCG…QRIH, YECD…QRVH, YECK…LRIH, YECK…QRIH, YECI…QKTH, YECN…QRIH, YKCT…QRLH, and YQCF…QRSH.

The protein belongs to the krueppel C2H2-type zinc-finger protein family.

The protein localises to the nucleus. In terms of biological role, may be involved in transcriptional regulation. This Homo sapiens (Human) protein is Zinc finger protein 471 (ZNF471).